The chain runs to 235 residues: uncharacterized protein (235 aa).

The tract at residues 37-235 (QNAKLNDGDN…GGEDYPWPWN (199 aa)) is disordered. A compositionally biased stretch (acidic residues) spans 72 to 89 (GSDDYSDVEDGGAEEGDS). Residues 112–124 (TSSTSTASTSSGS) show a composition bias toward low complexity. Over residues 152-170 (RRPELDLSPKIENRSDSSS) the composition is skewed to basic and acidic residues. The span at 185–202 (NKDNPSRGQGNENPSASD) shows a compositional bias: polar residues.

The protein belongs to the herpesviridae BKRF4 family.

This is an uncharacterized protein from Alcelaphine herpesvirus 1 (strain C500) (AlHV-1).